The sequence spans 2617 residues: Ubiquitin carboxyl-terminal hydrolase 24 (2617 aa).

Residues 3 to 44 (SEEEQHMTTLLCMGFSDPATIRKALRLAKNDINEAVALLTNE) enclose the UBA domain. A disordered region spans residues 45–99 (RPGLDYGGYEPMDSGGPSPGPGGGPRGDSGSDGSGPSRGGSTGGGGGFDPPPAYH). Residues S62 and S85 each carry the phosphoserine modification. A compositionally biased stretch (gly residues) spans 65–92 (PGGGPRGDSGSDGSGPSRGGSTGGGGGF). A Phosphotyrosine modification is found at Y939. Disordered stretches follow at residues 1030–1056 (KTSG…SGAF) and 1127–1148 (LLSE…QQHQ). 2 stretches are compositionally biased toward low complexity: residues 1031-1056 (TSGS…SGAF) and 1128-1148 (LSET…QQHQ). A phosphoserine mark is found at S1138 and S1282. The region spanning 1686 to 2039 (VGLRNGGATC…NAYMLFYQRV (354 aa)) is the USP domain. Catalysis depends on C1695, which acts as the Nucleophile. Residues 1920–1942 (QDSSSEVGENGRNMDQGGGGSPR) form a disordered region. Phosphoserine is present on S1940. H1967 acts as the Proton acceptor in catalysis. Phosphoserine occurs at positions 2044, 2074, and 2558. A disordered region spans residues 2060-2087 (AEDLSLSAPSSPEISPQSSPRPHRPNND). Positions 2066–2079 (SAPSSPEISPQSSP) are enriched in low complexity. T2562 is modified (phosphothreonine). The interval 2572 to 2617 (EKEQSGSSNGSESSPANENGERHLQQGSESPMMIGELRSDLDDVDP) is disordered. Low complexity predominate over residues 2576-2589 (SGSSNGSESSPANE). Residue S2601 is modified to Phosphoserine. A compositionally biased stretch (basic and acidic residues) spans 2608 to 2617 (LRSDLDDVDP).

This sequence belongs to the peptidase C19 family.

The catalysed reaction is Thiol-dependent hydrolysis of ester, thioester, amide, peptide and isopeptide bonds formed by the C-terminal Gly of ubiquitin (a 76-residue protein attached to proteins as an intracellular targeting signal).. Its function is as follows. Protease that can remove conjugated ubiquitin from target proteins and polyubiquitin chains. Deubiquitinates DDB2, preventing its proteasomal degradation. This chain is Ubiquitin carboxyl-terminal hydrolase 24 (Usp24), found in Mus musculus (Mouse).